We begin with the raw amino-acid sequence, 287 residues long: Phosphatidylserine decarboxylase proenzyme (287 aa).

Active-site charge relay system; for autoendoproteolytic cleavage activity residues include Asp90, His147, and Ser252. Residue Ser252 is the Schiff-base intermediate with substrate; via pyruvic acid; for decarboxylase activity of the active site. Ser252 carries the post-translational modification Pyruvic acid (Ser); by autocatalysis.

This sequence belongs to the phosphatidylserine decarboxylase family. PSD-B subfamily. Prokaryotic type I sub-subfamily. As to quaternary structure, heterodimer of a large membrane-associated beta subunit and a small pyruvoyl-containing alpha subunit. Pyruvate is required as a cofactor. In terms of processing, is synthesized initially as an inactive proenzyme. Formation of the active enzyme involves a self-maturation process in which the active site pyruvoyl group is generated from an internal serine residue via an autocatalytic post-translational modification. Two non-identical subunits are generated from the proenzyme in this reaction, and the pyruvate is formed at the N-terminus of the alpha chain, which is derived from the carboxyl end of the proenzyme. The autoendoproteolytic cleavage occurs by a canonical serine protease mechanism, in which the side chain hydroxyl group of the serine supplies its oxygen atom to form the C-terminus of the beta chain, while the remainder of the serine residue undergoes an oxidative deamination to produce ammonia and the pyruvoyl prosthetic group on the alpha chain. During this reaction, the Ser that is part of the protease active site of the proenzyme becomes the pyruvoyl prosthetic group, which constitutes an essential element of the active site of the mature decarboxylase.

It localises to the cell membrane. The enzyme catalyses a 1,2-diacyl-sn-glycero-3-phospho-L-serine + H(+) = a 1,2-diacyl-sn-glycero-3-phosphoethanolamine + CO2. It functions in the pathway phospholipid metabolism; phosphatidylethanolamine biosynthesis; phosphatidylethanolamine from CDP-diacylglycerol: step 2/2. Its function is as follows. Catalyzes the formation of phosphatidylethanolamine (PtdEtn) from phosphatidylserine (PtdSer). This Pseudomonas entomophila (strain L48) protein is Phosphatidylserine decarboxylase proenzyme.